Consider the following 493-residue polypeptide: MTTVRTRIAPSPTGDPHVGTAYIALFNYCFAKQHGGEFILRIEDTDQLRSTRESEQQIFDALRWLGIEWNEGPDVGGSHGPYRQSERGEIYAKYAKELVDAGHAFYCFCTAEELEQMRAEQMARGETPRYDGRALLLSDEEVQRRLAAGEPHVIRMKVPSEGICVVPDMLRGDVEIPWDRMDMQVLMKNDGLPTYFLANVVDDHLMGITHVLRGEEWLPSAPKLIKLYEYFGWEQPKLCYMPLLRNPDKSKLSKRKNPTSVTFYERMGFMPEAMLNYLGRMGWSMPDEREKFSLAEMVEHFDLSRISLGGPIFDIEKLSWLNGQWLRELPVEEFAARVQKWAFNSDYMMKIAPHVQGRVETFSQVAPLGGFFFEGALKLDAKLFESKKLSADQVRQVMQLILWKLESLRQWEKDRITGCIQAVVESLELKLRDAMPLMFAAITGQASSVSVLDAMEILGPDLTRYRLRQAIDLLGGVSKKENKEWEKLLASIA.

Positions 10 to 20 match the 'HIGH' region motif; sequence PSPTGDPHVGT. The short motif at 251–255 is the 'KMSKS' region element; that stretch reads KLSKR. Lys-254 lines the ATP pocket.

This sequence belongs to the class-I aminoacyl-tRNA synthetase family. Glutamate--tRNA ligase type 1 subfamily. In terms of assembly, monomer.

It is found in the cytoplasm. It carries out the reaction tRNA(Glu) + L-glutamate + ATP = L-glutamyl-tRNA(Glu) + AMP + diphosphate. In terms of biological role, catalyzes the attachment of glutamate to tRNA(Glu) in a two-step reaction: glutamate is first activated by ATP to form Glu-AMP and then transferred to the acceptor end of tRNA(Glu). This is Glutamate--tRNA ligase from Pseudomonas entomophila (strain L48).